We begin with the raw amino-acid sequence, 423 residues long: AP-1 complex subunit mu-1 (423 aa).

At serine 2 the chain carries N-acetylserine. Residues threonine 152, threonine 154, and threonine 223 each carry the phosphothreonine modification. An MHD domain is found at 168–421 (KNEVFLDVIE…ITQNGDYQLR (254 aa)).

Belongs to the adaptor complexes medium subunit family. As to quaternary structure, adaptor protein complex 1 (AP-1) is a heterotetramer composed of two large adaptins (gamma-type subunit AP1G1 and beta-type subunit AP1B1), a medium adaptin (mu-type subunit AP1M1 or AP1M2) and a small adaptin (sigma-type subunit AP1S1 or AP1S2 or AP1S3). Interacts with MARCHF11. In terms of processing, phosphorylation of membrane-bound AP1M1/AP1M2 increases its affinity for sorting signals.

The protein resides in the cytoplasmic vesicle. The protein localises to the clathrin-coated vesicle membrane. It is found in the golgi apparatus. Subunit of clathrin-associated adaptor protein complex 1 that plays a role in protein sorting in the trans-Golgi network (TGN) and endosomes. The AP complexes mediate the recruitment of clathrin to membranes and the recognition of sorting signals within the cytosolic tails of transmembrane cargo molecules. The chain is AP-1 complex subunit mu-1 from Bos taurus (Bovine).